The chain runs to 1528 residues: DNA topoisomerase 2-alpha (1528 aa).

Methionine 1 is subject to N-acetylmethionine. Serine 4 carries the phosphoserine modification. Lysine 17 is covalently cross-linked (Glycyl lysine isopeptide (Lys-Gly) (interchain with G-Cter in SUMO2)). ATP-binding positions include asparagine 90, asparagine 119, and serine 147 to asparagine 149. Glycyl lysine isopeptide (Lys-Gly) (interchain with G-Cter in SUMO2) cross-links involve residues lysine 155 and lysine 156. Glycine 160–lysine 167 serves as a coordination point for ATP. At threonine 281 the chain carries Phosphothreonine. Residues lysine 341–lysine 343 form an interaction with DNA region. Lysine 351 is covalently cross-linked (Glycyl lysine isopeptide (Lys-Gly) (interchain with G-Cter in SUMO2)). Glutamine 375–lysine 377 is an ATP binding site. Residues lysine 385, lysine 396, lysine 415, lysine 417, lysine 424, and lysine 439 each participate in a glycyl lysine isopeptide (Lys-Gly) (interchain with G-Cter in SUMO2) cross-link. The 118-residue stretch at cysteine 454–glutamate 571 folds into the Toprim domain. Glutamate 460 contributes to the Mg(2+) binding site. Glycyl lysine isopeptide (Lys-Gly) (interchain with G-Cter in SUMO2) cross-links involve residues lysine 465, lysine 479, and lysine 528. 2 residues coordinate Mg(2+): aspartate 540 and aspartate 542. Residues lysine 583, lysine 598, lysine 613, lysine 621, lysine 624, lysine 631, lysine 638, lysine 654, lysine 661, and lysine 675 each participate in a glycyl lysine isopeptide (Lys-Gly) (interchain with G-Cter in SUMO2) cross-link. The region spanning isoleucine 714–leucine 1168 is the Topo IIA-type catalytic domain. The active-site O-(5'-phospho-DNA)-tyrosine intermediate is the tyrosine 804. Residues lysine 989 to serine 998 form an interaction with DNA region. Residue lysine 1074 forms a Glycyl lysine isopeptide (Lys-Gly) (interchain with G-Cter in SUMO2) linkage. Disordered stretches follow at residues lysine 1090–alanine 1118 and lysine 1183–serine 1211. Acidic residues predominate over residues aspartate 1098–threonine 1107. Serine 1105 is subject to Phosphoserine; by CK1. The span at glutamate 1108–alanine 1118 shows a compositional bias: low complexity. Residues lysine 1193 and lysine 1201 each participate in a glycyl lysine isopeptide (Lys-Gly) (interchain with G-Cter in SUMO2) cross-link. A Phosphoserine modification is found at serine 1211. Lysine 1226 participates in a covalent cross-link: Glycyl lysine isopeptide (Lys-Gly) (interchain with G-Cter in SUMO2). Residues alanine 1229–phenylalanine 1528 form a disordered region. A Glycyl lysine isopeptide (Lys-Gly) (interchain with G-Cter in SUMO1); alternate cross-link involves residue lysine 1238. Residue lysine 1238 forms a Glycyl lysine isopeptide (Lys-Gly) (interchain with G-Cter in SUMO2); alternate linkage. At threonine 1245 the chain carries Phosphothreonine. Residues glutamine 1258–alanine 1270 are compositionally biased toward basic and acidic residues. Glycyl lysine isopeptide (Lys-Gly) (interchain with G-Cter in SUMO2) cross-links involve residues lysine 1272, lysine 1279, and lysine 1282. 4 positions are modified to phosphoserine: serine 1291, serine 1293, serine 1295, and serine 1298. Residues aspartate 1296 to valine 1306 are compositionally biased toward low complexity. Threonine 1323 bears the Phosphothreonine mark. Acidic residues predominate over residues leucine 1326 to leucine 1345. A phosphoserine mark is found at serine 1328 and serine 1333. Threonine 1350 bears the Phosphothreonine mark. Residues lysine 1359 and lysine 1363 each participate in a glycyl lysine isopeptide (Lys-Gly) (interchain with G-Cter in SUMO2) cross-link. Serine 1370 and serine 1373 each carry phosphoserine. Lysine 1382 is covalently cross-linked (Glycyl lysine isopeptide (Lys-Gly) (interchain with G-Cter in SUMO2)). Phosphoserine occurs at positions 1384 and 1388. Lysine 1418 participates in a covalent cross-link: Glycyl lysine isopeptide (Lys-Gly) (interchain with G-Cter in SUMO2); alternate. An N6-acetyllysine; alternate modification is found at lysine 1418. The interaction with PLSCR1 stretch occupies residues lysine 1429 to lysine 1435. Residue lysine 1438 forms a Glycyl lysine isopeptide (Lys-Gly) (interchain with G-Cter in SUMO2); alternate linkage. N6-acetyllysine; alternate is present on lysine 1438. Residues lysine 1450 and lysine 1455 each participate in a glycyl lysine isopeptide (Lys-Gly) (interchain with G-Cter in SUMO2) cross-link. Serine 1465, serine 1467, serine 1470, and serine 1472 each carry phosphoserine. Residues lysine 1480 and lysine 1488 each participate in a glycyl lysine isopeptide (Lys-Gly) (interchain with G-Cter in SUMO2) cross-link. Residues alanine 1506 to glutamate 1519 are compositionally biased toward basic and acidic residues. Serine 1521 is subject to Phosphoserine.

The protein belongs to the type II topoisomerase family. Homodimer. Interacts with COPS5. Interacts with RECQL5; this stimulates DNA decatenation. Interacts with SETMAR; stimulates the topoisomerase activity. Interacts with DHX9; this interaction occurs in a E2 enzyme UBE2I- and RNA-dependent manner, negatively regulates DHX9-mediated double-stranded DNA and RNA duplex helicase activity and stimulates TOP2A-mediated supercoiled DNA relaxation activity. Interacts with HNRNPU (via C-terminus); this interaction protects the topoisomerase TOP2A from degradation and positively regulates the relaxation of supercoiled DNA in a RNA-dependent manner. Interacts with MCM3AP. Interacts with ERCC6. Interacts with PLSCR1. Interacts with GCNA; this interaction allows the resolution of topoisomerase II (TOP2A) DNA-protein cross-links. Interacts with POL1RA/RPA1 (via dock II) and UBTF in the context of Pol I complex; may assist Pol I transcription initiation by releasing supercoils occurring during DNA unwinding. Interacts with TPRN; TPRN interacts with a number of DNA damage response proteins, is recruited to sites of DNA damage and may play a role in DNA damage repair. Mg(2+) serves as cofactor. Requires Mn(2+) as cofactor. Ca(2+) is required as a cofactor. In terms of processing, phosphorylation has no effect on catalytic activity. However, phosphorylation at Ser-1105 by CSNK1D/CK1 promotes DNA cleavable complex formation.

It localises to the cytoplasm. The protein resides in the nucleus. It is found in the nucleoplasm. The protein localises to the nucleolus. The catalysed reaction is ATP-dependent breakage, passage and rejoining of double-stranded DNA.. Functionally, key decatenating enzyme that alters DNA topology by binding to two double-stranded DNA molecules, generating a double-stranded break in one of the strands, passing the intact strand through the broken strand, and religating the broken strand. May play a role in regulating the period length of BMAL1 transcriptional oscillation. The protein is DNA topoisomerase 2-alpha (Top2a) of Mus musculus (Mouse).